The chain runs to 3644 residues: Msx2-interacting protein (3644 aa).

A DNA-binding region spans residues 1–574; that stretch reads MVRETRHLWV…DAQAAVKETK (574 aa). In terms of domain architecture, RRM 1 spans 6–81; the sequence is RHLWVGNLPE…RDLRTDYNEP (76 aa). Serine 99 is subject to Phosphoserine. 3 disordered regions span residues 103–124, 170–209, and 225–331; these read EVSGFRGSAGGPAYGPPPSLHA, YRDPRERTLQHGLYYTSRSRSPNRFDAHDPRYEPRAREQF, and TREV…EKDE. Residue arginine 108 is modified to Omega-N-methylarginine. 2 positions are modified to phosphoserine: serine 188 and serine 190. 2 stretches are compositionally biased toward basic and acidic residues: residues 192 to 207 and 225 to 237; these read NRFDAHDPRYEPRARE and TREVRGRRPERSY. The span at 245–310 shows a compositional bias: low complexity; the sequence is PHSSQSRNQS…TASDDSPARS (66 aa). Serine 310 is subject to Phosphoserine. RRM domains lie at 336 to 416, 439 to 514, and 518 to 590; these read FGIK…VGPE, RTLF…FGKS, and NCVW…FANR. A coiled-coil region spans residues 559–575; the sequence is LYSEIEDAQAAVKETKG. 2 disordered regions span residues 625 to 673 and 716 to 1413; these read SKHE…SRRD and IREY…ASSF. Basic and acidic residues-rich tracts occupy residues 639 to 656 and 716 to 745; these read KCREERRGSYEYSQERTY and IREYSYRQRERERERERFESDRDHERRPIE. Phosphoserine is present on serine 647. A phosphoserine mark is found at serine 747, serine 749, serine 758, and serine 762. Residues 765–783 show a composition bias toward basic and acidic residues; it reads HSERLPSDSERRLYRRSSE. Low complexity predominate over residues 784–794; it reads RSGSCSSVSPP. Residue serine 792 is modified to Phosphoserine. Residues 795-842 show a composition bias toward basic and acidic residues; the sequence is RYDKLEKARLERYTKNEKADKERTFDPERVERERRIVRKEKGEKDKAE. Positions 822-850 form a coiled coil; sequence ERVERERRIVRKEKGEKDKAERQKRKGKA. Residues serine 852, serine 855, and serine 869 each carry the phosphoserine modification. Basic and acidic residues-rich tracts occupy residues 863–894, 904–930, 947–975, and 1009–1071; these read ENDREQSPEKPRGSTKLSRDRADKEGPAKNRL, RVKEKEGKVIEHPPPEKLKARLGRDTT, AKSDPARGKALREKVLPSHAEVGEKEGRT, and LKIE…KLER. Residues serine 1077 and serine 1183 each carry the phosphoserine modification. Positions 1138-1227 are enriched in basic and acidic residues; sequence GPEKEEVRKN…ERRSLVHEVG (90 aa). The stretch at 1185-1206 forms a coiled coil; it reads RKQMEQSRRKQRMEMEIAKAEK. A phosphoserine mark is found at serine 1209, serine 1237, serine 1267, serine 1276, serine 1283, serine 1293, serine 1298, serine 1302, and serine 1348. Positions 1246–1272 are enriched in basic and acidic residues; that stretch reads DHVDFDICTKRERNYRSSRQISEDSER. The span at 1283 to 1292 shows a compositional bias: basic and acidic residues; that stretch reads SFHDDDDPRG. Residues 1351-1365 show a composition bias toward basic and acidic residues; that stretch reads EPSRWDPPMKQDPSR. Serine 1395 and serine 1397 each carry phosphoserine. Residues threonine 1454 and threonine 1456 each carry the phosphothreonine modification. Disordered stretches follow at residues 1494 to 1538 and 1557 to 2447; these read DKEK…QERQ and RLQH…ARFK. Residues 1509-1544 adopt a coiled-coil conformation; the sequence is YMKKKKIRTDSEGKLDDKKDERREEEQERQELFASR. Composition is skewed to basic and acidic residues over residues 1516–1538 and 1557–1567; these read RTDSEGKLDDKKDERREEEQERQ and RLQHLERKSEE. Polar residues predominate over residues 1582-1591; it reads EGANSTSDSV. The segment covering 1601 to 1646 has biased composition (basic and acidic residues); the sequence is RFMELTRMQQKEKEKDQKPKEAEKQEEPETHPKTPEPAAETKEPEP. Residues 1607–1627 adopt a coiled-coil conformation; sequence RMQQKEKEKDQKPKEAEKQEE. Position 1634 is a phosphothreonine (threonine 1634). Positions 1701–1710 are enriched in low complexity; it reads VSEPVSVPVE. Positions 1756–1765 are enriched in polar residues; sequence PGTTVSQVES. Basic and acidic residues predominate over residues 1782–1796; sequence QRSEEAEEGKVEKPD. Residues 1797-1810 are compositionally biased toward polar residues; that stretch reads TTPSTEPDATQNAG. The residue at position 1844 (threonine 1844) is a Phosphothreonine. Basic and acidic residues-rich tracts occupy residues 1857–1871 and 1879–1894; these read PVTRKSERIDREKLK and EAQKLLELKMEAEKIT. Phosphoserine occurs at positions 1915 and 1936. The segment covering 1930–1943 has biased composition (basic and acidic residues); sequence TDHESRSPAKEPVE. Threonine 1965 is modified (phosphothreonine). Over residues 1967 to 1976 the composition is skewed to basic residues; it reads RRGRPPKTRR. Basic and acidic residues-rich tracts occupy residues 1977–1991, 2039–2066, 2074–2084, and 2097–2106; these read RAEEDGEHERKEPAE, GNPKSRGEREAASEPKRDRRDPSTDKSG, VLERKPPEKTY, and GMDRAAHQRS. Phosphoserine occurs at positions 2128 and 2134. The span at 2129 to 2147 shows a compositional bias: polar residues; that stretch reads PQESESPQKGSGSSPQLAN. An interaction with MSX2 region spans residues 2138 to 2462; that stretch reads GSGSSPQLAN…ESDPVTPPSD (325 aa). The residue at position 2171 (threonine 2171) is a Phosphothreonine. 2 stretches are compositionally biased toward low complexity: residues 2191–2212 and 2231–2242; these read EPSAAAASKGTATATATAASEE and AAAIGSIISDAS. The 489-residue stretch at 2216-2704 folds into the RID domain; sequence EHGHKPAHQA…NVLTGPVNVL (489 aa). Residues 2261 to 2274 are compositionally biased toward basic and acidic residues; that stretch reads HPREGMEPGLHEAE. The span at 2281–2290 shows a compositional bias: polar residues; it reads GTATESSAPQ. Basic and acidic residues predominate over residues 2318–2329; it reads KGSKAEVTPPRK. Over residues 2330 to 2345 the composition is skewed to basic residues; sequence DKGRQKTTRRRKRNAN. The span at 2359–2379 shows a compositional bias: low complexity; the sequence is AEQTQSESPAAEEATAATPEA. At serine 2366 the chain carries Phosphoserine. Position 2419 is a phosphothreonine (threonine 2419). Serine 2450 and serine 2454 each carry phosphoserine. Disordered stretches follow at residues 2453-2472, 2481-2528, 2745-2781, and 2829-2849; these read ESDPVTPPSDSGIPPPTIPL, PVIP…MDTS, AAKGKQRASSNENSRFHPGSMSVIDDRPADTGSGAGL, and SQVKADSITPTQSAPKGPQTP. A Phosphothreonine modification is found at threonine 2458. Serine 2491 carries the phosphoserine modification. Residues 2706-2845 form an interaction with RBPSUH region; the sequence is TPVSATVGTV…ITPTQSAPKG (140 aa). Threonine 2913 and threonine 2925 each carry phosphothreonine. Positions 2974-3023 are disordered; that stretch reads NHVPSGPSTPADRTIAHLATPKPDTHSPRPTGPTPGLFPRPCHPSSTTST. Pro residues predominate over residues 3003–3015; the sequence is PTGPTPGLFPRPC. Arginine 3088 and arginine 3096 each carry asymmetric dimethylarginine. Residues 3310–3473 are disordered; that stretch reads RTKTSAQVPP…QESSPHGTPQ (164 aa). Positions 3323–3340 are enriched in low complexity; the sequence is PLQSTQSAQPAPSTQATQ. Polar residues predominate over residues 3366–3379; it reads QVSQEAKGTQTGGV. The residue at position 3413 (serine 3413) is a Phosphoserine. An SPOC domain is found at 3478–3644; it reads MVQLLKKYPI…PHLMIVIASV (167 aa).

This sequence belongs to the RRM Spen family. In terms of assembly, interacts with NCOR2, HDAC1, HDAC2, RBBP4, MBD3 and MTA1L1. Interacts with the nuclear receptors RAR and PPARD. Interacts with RAR in absence of ligand. Binds to the steroid receptor RNA coactivator SRA. Interacts with MSX2. Interacts with RBPSUH; this interaction may prevent the interaction between RBPSUH and NOTCH1. Binds to HIPK3. Highly expressed in testis. Expressed at lower level in brain, lung, spleen, liver and kidney. Weakly expressed in cardiac and skeletal muscles and ovary. In spleen, it is expressed in follicular B-cells, while it is weakly expressed in marginal zone B-cells.

The protein localises to the nucleus. In terms of biological role, may serve as a nuclear matrix platform that organizes and integrates transcriptional responses. In osteoblasts, supports transcription activation: synergizes with RUNX2 to enhance FGFR2-mediated activation of the osteocalcin FGF-responsive element (OCFRE). Has also been shown to be an essential corepressor protein, which probably regulates different key pathways, such as the Notch pathway. Negative regulator of the Notch pathway via its interaction with RBPSUH, which prevents the association between NOTCH1 and RBPSUH, and therefore suppresses the transactivation activity of Notch signaling. Blocks the differentiation of precursor B-cells into marginal zone B-cells. Probably represses transcription via the recruitment of large complexes containing histone deacetylase proteins. May bind both to DNA and RNA. This Mus musculus (Mouse) protein is Msx2-interacting protein (Spen).